Here is a 496-residue protein sequence, read N- to C-terminus: NADH-quinone oxidoreductase subunit N (496 aa).

A run of 14 helical transmembrane segments spans residues 12-32 (LNLI…IILI), 43-63 (SLYV…TLGL), 79-99 (VSIV…PLAL), 108-128 (SYPE…FMVA), 132-152 (LILI…LIAL), 166-186 (FTMG…IYAL), 207-227 (GLMI…AFKL), 257-277 (VAAF…GVEW), 280-300 (VVIL…ALVQ), 306-326 (MLAY…ALDT), 333-353 (IFFY…MLWM), 383-403 (AVIM…SIFW), 416-436 (GYVW…YYYL), and 464-484 (AVVG…QPLV).

Belongs to the complex I subunit 2 family. As to quaternary structure, NDH-1 is composed of 14 different subunits. Subunits NuoA, H, J, K, L, M, N constitute the membrane sector of the complex.

The protein resides in the cell inner membrane. It catalyses the reaction a quinone + NADH + 5 H(+)(in) = a quinol + NAD(+) + 4 H(+)(out). NDH-1 shuttles electrons from NADH, via FMN and iron-sulfur (Fe-S) centers, to quinones in the respiratory chain. The immediate electron acceptor for the enzyme in this species is believed to be ubiquinone. Couples the redox reaction to proton translocation (for every two electrons transferred, four hydrogen ions are translocated across the cytoplasmic membrane), and thus conserves the redox energy in a proton gradient. This Sulfurovum sp. (strain NBC37-1) protein is NADH-quinone oxidoreductase subunit N.